The chain runs to 473 residues: Photosystem II CP43 reaction center protein (473 aa).

Positions 1-14 (MKILYSLRRFYHVE) are excised as a propeptide. T15 carries the N-acetylthreonine modification. T15 is modified (phosphothreonine). The next 5 helical transmembrane spans lie at 69–93 (LFEV…PHLA), 134–155 (LLGP…KDRN), 178–200 (KALY…RKIT), 255–275 (KPFA…LSYS), and 291–312 (WFNN…ASQA). [CaMn4O5] cluster is bound at residue E367. The helical transmembrane segment at 447-471 (RARAAAAGFEKGIDRDLEPVLFMTP) threads the bilayer.

It belongs to the PsbB/PsbC family. PsbC subfamily. As to quaternary structure, PSII is composed of 1 copy each of membrane proteins PsbA, PsbB, PsbC, PsbD, PsbE, PsbF, PsbH, PsbI, PsbJ, PsbK, PsbL, PsbM, PsbT, PsbX, PsbY, PsbZ, Psb30/Ycf12, at least 3 peripheral proteins of the oxygen-evolving complex and a large number of cofactors. It forms dimeric complexes. It depends on Binds multiple chlorophylls and provides some of the ligands for the Ca-4Mn-5O cluster of the oxygen-evolving complex. It may also provide a ligand for a Cl- that is required for oxygen evolution. PSII binds additional chlorophylls, carotenoids and specific lipids. as a cofactor.

The protein resides in the plastid. Its subcellular location is the chloroplast thylakoid membrane. Functionally, one of the components of the core complex of photosystem II (PSII). It binds chlorophyll and helps catalyze the primary light-induced photochemical processes of PSII. PSII is a light-driven water:plastoquinone oxidoreductase, using light energy to abstract electrons from H(2)O, generating O(2) and a proton gradient subsequently used for ATP formation. This is Photosystem II CP43 reaction center protein from Lemna minor (Common duckweed).